A 907-amino-acid chain; its full sequence is Sensor protein GacS (907 aa).

The next 3 membrane-spanning stretches (helical) occupy residues 9–25 (ASLM…WMQL), 84–101 (VLAH…IGSG), and 159–178 (LFAS…TLAV). The 53-residue stretch at 182-234 (RTINGPMSQIKQAVSQLKDGNLETRLPPLGSRELDELASGINRMAATLQNAQE) folds into the HAMP domain. Residues 281 to 502 (NMSHEIRTPL…EFWISLKLPK (222 aa)) form the Histidine kinase domain. H284 is modified (phosphohistidine; by autocatalysis). In terms of domain architecture, Response regulatory spans 658-777 (RVLCVDDNPA…QLAQVVLKWT (120 aa)). D707 carries the 4-aspartylphosphate modification. Residues 814–907 (KADLAADMLA…RLEAEARVMA (94 aa)) form the HPt domain. H853 carries the post-translational modification Phosphohistidine.

Activation requires a sequential transfer of a phosphate group from a His in the primary transmitter domain, to an Asp in the receiver domain and to a His in the secondary transmitter domain.

It is found in the cell inner membrane. The enzyme catalyses ATP + protein L-histidine = ADP + protein N-phospho-L-histidine.. In terms of biological role, forms part of a two-component regulatory system GacA/GacS(LemA). May be involved in lesion formation, swarming and in the production of extracellular protease, syringomycin and N-acyl-L-homoserine lactone (acyl-HSL). Required for pathogenicity on bean. The sequence is that of Sensor protein GacS (gacS) from Pseudomonas syringae pv. syringae.